A 140-amino-acid polypeptide reads, in one-letter code: Large ribosomal subunit protein uL22c (140 aa).

It belongs to the universal ribosomal protein uL22 family. In terms of assembly, part of the 50S ribosomal subunit.

The protein resides in the plastid. It is found in the chloroplast. Functionally, this protein binds specifically to 23S rRNA. In terms of biological role, the globular domain of the protein is located near the polypeptide exit tunnel on the outside of the subunit, while an extended beta-hairpin is found that lines the wall of the exit tunnel in the center of the 70S ribosome. This Calycanthus floridus var. glaucus (Eastern sweetshrub) protein is Large ribosomal subunit protein uL22c (rpl22).